The primary structure comprises 402 residues: Imidazolonepropionase (402 aa).

Residues His-66 and His-68 each contribute to the Fe(3+) site. His-66 and His-68 together coordinate Zn(2+). 4-imidazolone-5-propanoate-binding residues include Arg-75, Tyr-138, and His-171. Tyr-138 provides a ligand contact to N-formimidoyl-L-glutamate. His-236 is a Fe(3+) binding site. His-236 serves as a coordination point for Zn(2+). Gln-239 provides a ligand contact to 4-imidazolone-5-propanoate. Asp-311 contacts Fe(3+). Position 311 (Asp-311) interacts with Zn(2+). 2 residues coordinate N-formimidoyl-L-glutamate: Asn-313 and Gly-315. Residue Thr-316 coordinates 4-imidazolone-5-propanoate.

It belongs to the metallo-dependent hydrolases superfamily. HutI family. Zn(2+) serves as cofactor. It depends on Fe(3+) as a cofactor.

It is found in the cytoplasm. The catalysed reaction is 4-imidazolone-5-propanoate + H2O = N-formimidoyl-L-glutamate. The protein operates within amino-acid degradation; L-histidine degradation into L-glutamate; N-formimidoyl-L-glutamate from L-histidine: step 3/3. In terms of biological role, catalyzes the hydrolytic cleavage of the carbon-nitrogen bond in imidazolone-5-propanoate to yield N-formimidoyl-L-glutamate. It is the third step in the universal histidine degradation pathway. This is Imidazolonepropionase from Pseudomonas aeruginosa (strain UCBPP-PA14).